Reading from the N-terminus, the 281-residue chain is MTAQLIDGNALSRQLRAEVARRAAALRARGITPGLAVVLVGENPASQVYVRNKVKACQDNGLHSVLEHYPAALSEAELLARVHALNNDPAIHGILVQLPLPAHIDAHKVIEAIAPGKDVDGFHVASAGALMVGQPGFWPCTPYGCMKMLESIGYDLRGKHAVVIGRSNIVGKPMAMMLLQKNATVTICHSATKDLKAMTLQADVIVAAVGKRNVLTADMVKPGAVVIDVGMNRNDEGKLCGDVDFEGVKEVAGYITPVPGGVGPMTITMLLVNTLESAERL.

NADP(+) is bound by residues 165–167 (GRS) and S190.

This sequence belongs to the tetrahydrofolate dehydrogenase/cyclohydrolase family. Homodimer.

It carries out the reaction (6R)-5,10-methylene-5,6,7,8-tetrahydrofolate + NADP(+) = (6R)-5,10-methenyltetrahydrofolate + NADPH. It catalyses the reaction (6R)-5,10-methenyltetrahydrofolate + H2O = (6R)-10-formyltetrahydrofolate + H(+). It participates in one-carbon metabolism; tetrahydrofolate interconversion. Catalyzes the oxidation of 5,10-methylenetetrahydrofolate to 5,10-methenyltetrahydrofolate and then the hydrolysis of 5,10-methenyltetrahydrofolate to 10-formyltetrahydrofolate. The sequence is that of Bifunctional protein FolD from Polaromonas sp. (strain JS666 / ATCC BAA-500).